Consider the following 391-residue polypeptide: 4-coumarate--CoA ligase (391 aa).

This sequence belongs to the ATP-dependent AMP-binding enzyme family.

It catalyses the reaction (E)-4-coumarate + ATP + CoA = (E)-4-coumaroyl-CoA + AMP + diphosphate. Its function is as follows. Converts p-coumaric acid into p-coumaryl CoA. This is necessary for the activation of the photoactive yellow protein (PYP) chromophore. This Halorhodospira halophila (Ectothiorhodospira halophila) protein is 4-coumarate--CoA ligase (pcl).